Consider the following 123-residue polypeptide: Small ribosomal subunit protein uS13 (123 aa).

The tract at residues 97–123 is disordered; sequence PVRGQRTRSNARTRKGPRPSRIKKKGK. Residues 101-123 are compositionally biased toward basic residues; sequence QRTRSNARTRKGPRPSRIKKKGK.

It belongs to the universal ribosomal protein uS13 family. In terms of assembly, part of the 30S ribosomal subunit. Forms a loose heterodimer with protein S19. Forms two bridges to the 50S subunit in the 70S ribosome.

In terms of biological role, located at the top of the head of the 30S subunit, it contacts several helices of the 16S rRNA. In the 70S ribosome it contacts the 23S rRNA (bridge B1a) and protein L5 of the 50S subunit (bridge B1b), connecting the 2 subunits; these bridges are implicated in subunit movement. Contacts the tRNAs in the A and P-sites. The protein is Small ribosomal subunit protein uS13 of Fervidobacterium nodosum (strain ATCC 35602 / DSM 5306 / Rt17-B1).